We begin with the raw amino-acid sequence, 419 residues long: Chalcone synthase D (419 aa).

Residue Cys164 is part of the active site.

This sequence belongs to the thiolase-like superfamily. Chalcone/stilbene synthases family.

It carries out the reaction (E)-4-coumaroyl-CoA + 3 malonyl-CoA + 3 H(+) = 2',4,4',6'-tetrahydroxychalcone + 3 CO2 + 4 CoA. Its pathway is secondary metabolite biosynthesis; flavonoid biosynthesis. The primary product of this enzyme is 4,2',4',6'-tetrahydroxychalcone (also termed naringenin-chalcone or chalcone) which can under specific conditions spontaneously isomerize into naringenin. The polypeptide is Chalcone synthase D (CHSD) (Petunia hybrida (Petunia)).